Here is a 517-residue protein sequence, read N- to C-terminus: Phospholipase C C (517 aa).

A signal peptide (tat-type signal) is located at residues 1-39; it reads MVSQGAFAGMSRRAFLAKAAGAGAAAVLTDWAAPVIEKA.

The protein belongs to the bacterial phospholipase C family. Post-translationally, predicted to be exported by the Tat system. The position of the signal peptide cleavage has not been experimentally proven.

It is found in the secreted. It localises to the cell wall. The catalysed reaction is a 1,2-diacyl-sn-glycero-3-phosphocholine + H2O = phosphocholine + a 1,2-diacyl-sn-glycerol + H(+). It catalyses the reaction 1,2-dihexadecanoyl-sn-glycero-3-phosphocholine + H2O = 1,2-dihexadecanoyl-sn-glycerol + phosphocholine + H(+). Its function is as follows. Involved in virulence. Induces cytotoxic effects on mouse macrophage cell lines, via direct or indirect enzymatic hydrolysis of cell membrane phospholipids. Hydrolyzes phosphatidylcholine. Does not have hemolytic activity. This chain is Phospholipase C C, found in Mycobacterium tuberculosis (strain ATCC 25618 / H37Rv).